Consider the following 550-residue polypeptide: Chaperonin GroEL (550 aa).

ATP is bound by residues 30–33 (TLGP), K51, 87–91 (DGTTT), G415, 479–481 (NAA), and D495.

Belongs to the chaperonin (HSP60) family. In terms of assembly, forms a cylinder of 14 subunits composed of two heptameric rings stacked back-to-back. Interacts with the co-chaperonin GroES.

Its subcellular location is the cytoplasm. The enzyme catalyses ATP + H2O + a folded polypeptide = ADP + phosphate + an unfolded polypeptide.. Functionally, together with its co-chaperonin GroES, plays an essential role in assisting protein folding. The GroEL-GroES system forms a nano-cage that allows encapsulation of the non-native substrate proteins and provides a physical environment optimized to promote and accelerate protein folding. The chain is Chaperonin GroEL from Aromatoleum aromaticum (strain DSM 19018 / LMG 30748 / EbN1) (Azoarcus sp. (strain EbN1)).